The chain runs to 238 residues: MASRGVNKVILVGNLGQDPEVRYMPNGNAVANITVATSESWKDQQGQQQERTEWHRVVLFGKLAEITGEYLRKGSQVYLEGKLQTRKWKDQSGQDRYSTEVVIDQSGSMQMLGSRNQGGQGAPMGGMPQNGGYQSAPQQAAPAQNQYAPAPQAAPAYQAPAPQPQSGYNQPPAQQSYGQQQAQPHVQPHAQPQQGGYAPKPAAPAYQAPAAPAQRPAPQPQQNFTPDLDDGWDDDIPF.

Residues 6 to 110 (VNKVILVGNL…VVIDQSGSMQ (105 aa)) form the SSB domain. The DNA-binding element occupies 54 to 60 (WHRVVLF). The disordered stretch occupies residues 103–238 (IDQSGSMQML…DDGWDDDIPF (136 aa)). The segment covering 105 to 115 (QSGSMQMLGSR) has biased composition (polar residues). 2 stretches are compositionally biased toward low complexity: residues 125–160 (GGMPQNGGYQSAPQQAAPAQNQYAPAPQAAPAYQAP) and 170–222 (QPPA…QPQQ). Positions 227 to 238 (DLDDGWDDDIPF) are enriched in acidic residues. Positions 233–238 (DDDIPF) match the Important for interaction with partner proteins motif.

As to quaternary structure, homotetramer.

Its function is as follows. Plays an important role in DNA replication, recombination and repair. Binds to ssDNA and to an array of partner proteins to recruit them to their sites of action during DNA metabolism. This is Single-stranded DNA-binding protein (ssb) from Shewanella oneidensis (strain ATCC 700550 / JCM 31522 / CIP 106686 / LMG 19005 / NCIMB 14063 / MR-1).